A 431-amino-acid polypeptide reads, in one-letter code: Phosphate regulon sensor protein PhoR (431 aa).

At 1–9 (MLERLSWKR) the chain is on the cytoplasmic side. A helical membrane pass occupies residues 10–28 (LVLELLLCCLPAFILGAFF). The Periplasmic portion of the chain corresponds to 29 to 32 (GYLP). A helical membrane pass occupies residues 33–51 (WFLLASVTGLLIWHFWNLL). Residues 52-431 (RLSWWLWVDR…PERLIAKNSD (380 aa)) are Cytoplasmic-facing. A PAS domain is found at 96–172 (LIKRFRSGAE…RPLNLVLNTG (77 aa)). Positions 210-425 (NVSHELRTPL…RFSFVIPERL (216 aa)) constitute a Histidine kinase domain. The residue at position 213 (His-213) is a Phosphohistidine; by autocatalysis.

The protein localises to the cell inner membrane. It catalyses the reaction ATP + protein L-histidine = ADP + protein N-phospho-L-histidine.. In terms of biological role, member of the two-component regulatory system PhoR/PhoB involved in the phosphate regulon genes expression. PhoR may function as a membrane-associated protein kinase that phosphorylates PhoB in response to environmental signals. This chain is Phosphate regulon sensor protein PhoR (phoR), found in Escherichia coli (strain K12).